Here is a 337-residue protein sequence, read N- to C-terminus: DNA-directed RNA polymerase subunit alpha (337 aa).

Residues 1–233 (MIQKNWQELI…DQLSIFVNFE (233 aa)) are alpha N-terminal domain (alpha-NTD). The segment at 249-337 (FNPALLKKVD…DLAKRYEDQY (89 aa)) is alpha C-terminal domain (alpha-CTD).

The protein belongs to the RNA polymerase alpha chain family. Homodimer. The RNAP catalytic core consists of 2 alpha, 1 beta, 1 beta' and 1 omega subunit. When a sigma factor is associated with the core the holoenzyme is formed, which can initiate transcription.

It catalyses the reaction RNA(n) + a ribonucleoside 5'-triphosphate = RNA(n+1) + diphosphate. DNA-dependent RNA polymerase catalyzes the transcription of DNA into RNA using the four ribonucleoside triphosphates as substrates. This is DNA-directed RNA polymerase subunit alpha from Brucella melitensis biotype 2 (strain ATCC 23457).